Consider the following 157-residue polypeptide: Protein-export protein SecB (157 aa).

Belongs to the SecB family. In terms of assembly, homotetramer, a dimer of dimers. One homotetramer interacts with 1 SecA dimer.

Its subcellular location is the cytoplasm. In terms of biological role, one of the proteins required for the normal export of preproteins out of the cell cytoplasm. It is a molecular chaperone that binds to a subset of precursor proteins, maintaining them in a translocation-competent state. It also specifically binds to its receptor SecA. In Dichelobacter nodosus (strain VCS1703A), this protein is Protein-export protein SecB.